The chain runs to 59 residues: Large ribosomal subunit protein uL30 (59 aa).

This sequence belongs to the universal ribosomal protein uL30 family. In terms of assembly, part of the 50S ribosomal subunit.

This chain is Large ribosomal subunit protein uL30, found in Buchnera aphidicola subsp. Acyrthosiphon kondoi (Acyrthosiphon kondoi symbiotic bacterium).